The primary structure comprises 223 residues: MSLLVKICGLSTRETLETALDAGADMVGFVFFPPSPRHLSLELGRDLGRQVNRRALKVALTVDADDATLDNIMDALSPDIFQLHGKETVARLRDIKQRFGRPVMKAVPVATSADLAVLPGYAAVADRILFDARAPKDATRPGGLGAPFDWHLLENLDLNLPYMVSGGLHADNVAEALRITRAGGVDVSSGVESAPGVKDPEMIKAFIRAARATQDASQELSVR.

Belongs to the TrpF family.

The enzyme catalyses N-(5-phospho-beta-D-ribosyl)anthranilate = 1-(2-carboxyphenylamino)-1-deoxy-D-ribulose 5-phosphate. The protein operates within amino-acid biosynthesis; L-tryptophan biosynthesis; L-tryptophan from chorismate: step 3/5. In Bradyrhizobium diazoefficiens (strain JCM 10833 / BCRC 13528 / IAM 13628 / NBRC 14792 / USDA 110), this protein is N-(5'-phosphoribosyl)anthranilate isomerase.